Consider the following 154-residue polypeptide: Ribosome maturation factor RimP (154 aa).

It belongs to the RimP family.

It localises to the cytoplasm. Its function is as follows. Required for maturation of 30S ribosomal subunits. The protein is Ribosome maturation factor RimP of Heliobacterium modesticaldum (strain ATCC 51547 / Ice1).